Here is a 399-residue protein sequence, read N- to C-terminus: Acetate kinase (399 aa).

Residue asparagine 10 coordinates Mg(2+). Lysine 17 serves as a coordination point for ATP. A substrate-binding site is contributed by arginine 91. The active-site Proton donor/acceptor is aspartate 148. ATP-binding positions include histidine 208–glycine 212, aspartate 283–arginine 285, and glycine 331–asparagine 335. Glutamate 385 is a Mg(2+) binding site.

The protein belongs to the acetokinase family. Homodimer. It depends on Mg(2+) as a cofactor. Mn(2+) serves as cofactor.

The protein resides in the cytoplasm. It catalyses the reaction acetate + ATP = acetyl phosphate + ADP. The protein operates within metabolic intermediate biosynthesis; acetyl-CoA biosynthesis; acetyl-CoA from acetate: step 1/2. Functionally, catalyzes the formation of acetyl phosphate from acetate and ATP. Can also catalyze the reverse reaction. The chain is Acetate kinase from Shewanella sp. (strain MR-4).